Consider the following 414-residue polypeptide: Enolase (414 aa).

Position 162 (glutamine 162) interacts with (2R)-2-phosphoglycerate. Catalysis depends on glutamate 204, which acts as the Proton donor. 3 residues coordinate Mg(2+): aspartate 239, glutamate 280, and aspartate 307. The (2R)-2-phosphoglycerate site is built by lysine 332, arginine 361, serine 362, and lysine 383. Residue lysine 332 is the Proton acceptor of the active site.

Belongs to the enolase family. The cofactor is Mg(2+).

Its subcellular location is the cytoplasm. It is found in the secreted. The protein resides in the cell surface. It catalyses the reaction (2R)-2-phosphoglycerate = phosphoenolpyruvate + H2O. It functions in the pathway carbohydrate degradation; glycolysis; pyruvate from D-glyceraldehyde 3-phosphate: step 4/5. In terms of biological role, catalyzes the reversible conversion of 2-phosphoglycerate (2-PG) into phosphoenolpyruvate (PEP). It is essential for the degradation of carbohydrates via glycolysis. The sequence is that of Enolase from Campylobacter lari (strain RM2100 / D67 / ATCC BAA-1060).